A 316-amino-acid chain; its full sequence is Small ribosomal subunit protein RACK1 (316 aa).

WD repeat units follow at residues 13 to 44 (GHNGWVTSLATSLENPNMLLSGSRDKSLIIWN), 61 to 91 (GHSHIVSDCVISSDGAYALSASWDKTLRLWE), 103 to 133 (GHTNDVLSVSFSADNRQIVSGSRDRTIKLWN), 146 to 178 (GHTEWVSCVRFSPNPQNPVIVSSGWDKLVKVWE), 190 to 220 (GHTGYINAVTISPDGSLCASGGKDGTTMLWD), 231 to 260 (NANDEIHALVFSPNRYWLCAATSSSIIIFD), and 281 to 311 (SREPECVSLAWSADGQTLFAGYTDNIIRAWG).

Belongs to the WD repeat G protein beta family. Ribosomal protein RACK1 subfamily. Component of the small ribosomal subunit (SSU). Mature N.crassa ribosomes consist of a small (40S) and a large (60S) subunit. The 40S small subunit contains 1 molecule of ribosomal RNA (18S rRNA) and at least 32 different proteins. The large 60S subunit contains 3 rRNA molecules (26S, 5.8S and 5S rRNA) and at least 42 different proteins.

It localises to the cytoplasm. Its function is as follows. Component of the ribosome, a large ribonucleoprotein complex responsible for the synthesis of proteins in the cell. The small ribosomal subunit (SSU) binds messenger RNAs (mRNAs) and translates the encoded message by selecting cognate aminoacyl-transfer RNA (tRNA) molecules. The large subunit (LSU) contains the ribosomal catalytic site termed the peptidyl transferase center (PTC), which catalyzes the formation of peptide bonds, thereby polymerizing the amino acids delivered by tRNAs into a polypeptide chain. The nascent polypeptides leave the ribosome through a tunnel in the LSU and interact with protein factors that function in enzymatic processing, targeting, and the membrane insertion of nascent chains at the exit of the ribosomal tunnel. Required to activate general amino acid control under conditions of amino acid limitation in the vegetative growth phase, and for formation of protoperithecia in preparation for the sexual phase of the life cycle of N.crassa. The polypeptide is Small ribosomal subunit protein RACK1 (cpc-2) (Neurospora crassa (strain ATCC 24698 / 74-OR23-1A / CBS 708.71 / DSM 1257 / FGSC 987)).